Reading from the N-terminus, the 209-residue chain is Glutathione S-transferase (209 aa).

The GST N-terminal domain occupies 7-91 (FFFFFFFFFS…YLSKKYNISG (85 aa)). Glutathione-binding positions include 62-63 (QV), 75-76 (QS), D109, K121, and T125. The region spanning 93–209 (GELNEFYADM…YIANRKESVY (117 aa)) is the GST C-terminal domain.

It belongs to the GST superfamily. Homodimer. In the absence of ligands two homodimers may interact to form a tetramer.

The catalysed reaction is RX + glutathione = an S-substituted glutathione + a halide anion + H(+). Conjugation of reduced glutathione to a wide number of exogenous and endogenous hydrophobic electrophiles. May also function as a storage protein or ligandin for parasitotoxic ferriprotoporphyrin IX (hemin). The sequence is that of Glutathione S-transferase from Plasmodium yoelii yoelii.